Reading from the N-terminus, the 120-residue chain is Large ribosomal subunit protein eL18 (120 aa).

It belongs to the eukaryotic ribosomal protein eL18 family.

The protein is Large ribosomal subunit protein eL18 of Pyrococcus abyssi (strain GE5 / Orsay).